Reading from the N-terminus, the 111-residue chain is Putative FAD-linked sulfhydryl oxidase 347L (111 aa).

In terms of domain architecture, ERV/ALR sulfhydryl oxidase spans 2–109 (TDIDPHIWGP…LPESVARKKW (108 aa)). Cysteines 49 and 52 form a disulfide.

It belongs to the IIV-6 347L family. FAD is required as a cofactor.

It catalyses the reaction 2 R'C(R)SH + O2 = R'C(R)S-S(R)CR' + H2O2. Functionally, FAD-dependent sulfhydryl oxidase that catalyzes disulfide bond formation. The chain is Putative FAD-linked sulfhydryl oxidase 347L from Invertebrate iridescent virus 6 (IIV-6).